A 632-amino-acid polypeptide reads, in one-letter code: MDLGSSSDSAPDCWDQVDMEAPGSAPSGDGIAPAAMAAAEAAEAEAQRKHLSLAFSSQLNIHAKPFVPSVSAAEFVPSFLPGSAQPPAPTASSCDETCIGGAGEPEGKRMEWGAPVEPSKDGPLVSWEGSSSVVTMELSEPVVENGEVEMALEESWELKEVSEAKPEASLGDAGPPEESVKEVMEEKEEVRKSKSVSIPSGAPKKEHVNVVFIGHVDAGKSTIGGQIMFLTGMVDRRTLEKYEREAKEKNRETWYLSWALDTNQEERDKGKTVEVGRAYFETEKKHFTILDAPGHKSFVPNMIGGASQADLAVLVISARKGEFETGFEKGGQTREHAMLAKTAGVKYLIVLINKMDDPTVDWSSERYEECKEKLVPFLKKVGFSPKKDIHFMPCSGLTGANIKEQSDFCPWYTGLPFIPYLDSLPNFNRSIDGPIRLPIVDKYKDMGTVVLGKLESGSIFKGQQLVMMPNKHSVEVLGIVSDDAETDFVAPGENLKIRLKGIEEEEILPGFILCEPSNLCHSGRTFDVQIVIIEHKSIICPGYNAVLHIHTCIEEVEITALISLVDKKSGEKSKTRPRFVKQDQVCIARLRTAGTICLETFKDFPQMGRFTLRDEGKTIAIGKVLKLVPEKD.

2 disordered regions span residues 1–31 and 162–200; these read MDLG…GDGI and SEAK…SIPS. Over residues 178-192 the composition is skewed to basic and acidic residues; it reads ESVKEVMEEKEEVRK. One can recognise a tr-type G domain in the interval 205–429; it reads KEHVNVVFIG…YLDSLPNFNR (225 aa). Residues 214–221 form a G1 region; sequence GHVDAGKS. GTP is bound at residue 217 to 222; the sequence is DAGKST. The G2 stretch occupies residues 270 to 274; that stretch reads GKTVE. The G3 stretch occupies residues 291 to 294; sequence DAPG. Residues 353–356 and 395–397 contribute to the GTP site; these read NKMD and SGL. Positions 353–356 are G4; that stretch reads NKMD. Residues 395–397 form a G5 region; it reads SGL.

The protein belongs to the TRAFAC class translation factor GTPase superfamily. Classic translation factor GTPase family. ERF3 subfamily. In terms of assembly, component of the eRF1-eRF3-GTP ternary complex, composed of ETF1/ERF1 and ERF3 (GSPT1/ERF3A or GSPT2/ERF3B) and GTP. Component of the transient SURF (SMG1-UPF1-eRF1-eRF3) complex. Interacts with UPF1 and PABPC1. Highly expressed in brain. Moderately expressed in spleen and lung. Weakly expressed in heart, liver and kidney. Expression during the cell-cycle progression is constant.

Its subcellular location is the cytoplasm. It catalyses the reaction GTP + H2O = GDP + phosphate + H(+). Functionally, GTPase component of the eRF1-eRF3-GTP ternary complex, a ternary complex that mediates translation termination in response to the termination codons UAA, UAG and UGA. GSPT2/ERF3B mediates ETF1/ERF1 delivery to stop codons: The eRF1-eRF3-GTP complex binds to a stop codon in the ribosomal A-site. GTP hydrolysis by GSPT2/ERF3B induces a conformational change that leads to its dissociation, permitting ETF1/ERF1 to accommodate fully in the A-site. Component of the transient SURF complex which recruits UPF1 to stalled ribosomes in the context of nonsense-mediated decay (NMD) of mRNAs containing premature stop codons. The protein is Eukaryotic peptide chain release factor GTP-binding subunit ERF3B (Gspt2) of Mus musculus (Mouse).